We begin with the raw amino-acid sequence, 151 residues long: MAFGMLIYILLKAMGALSEEAALTASSLSTELWNSWTKNNTEAYYAEQPRLLKLMQTCLEEHHSYCINGLCAFHSELRKPICKCLAGYNGERCEHLTLNSYAHNSYERYIAVGIGIGILTSGILAIIYCYVRKRCRKLKSPYKVCMGETAL.

Residues Met-1–Ser-18 form the signal peptide. Residues Glu-19–Arg-108 lie on the Extracellular side of the membrane. A glycan (N-linked (GlcNAc...) asparagine) is linked at Asn-39. An EGF-like domain is found at Leu-54–Glu-94. 3 disulfides stabilise this stretch: Cys-58-Cys-71, Cys-66-Cys-82, and Cys-84-Cys-93. The chain crosses the membrane as a helical span at residues Tyr-109–Cys-129. The Cytoplasmic segment spans residues Tyr-130–Leu-151.

It is found in the membrane. In terms of biological role, promotes the growth of epithelial cells. In Gallus gallus (Chicken), this protein is Epigen (EPGN).